The primary structure comprises 146 residues: Ankyrin repeat-containing protein P16F5.05c (146 aa).

4 ANK repeats span residues 1-31 (MDVD…ELSR), 35-64 (NGNS…KEVI), 70-99 (SGNT…DPHI), and 103-132 (YEKS…AKGS).

It localises to the cytoplasm. The protein localises to the nucleus. The chain is Ankyrin repeat-containing protein P16F5.05c from Schizosaccharomyces pombe (strain 972 / ATCC 24843) (Fission yeast).